The following is a 543-amino-acid chain: Ipecac alkaloid beta-glucosidase 3 (543 aa).

A beta-D-glucoside is bound by residues Gln36, His140, 185–186 (NE), Tyr350, Glu422, Trp471, and Phe487. The Proton donor role is filled by Glu186. The Nucleophile role is filled by Glu422.

This sequence belongs to the glycosyl hydrolase 1 family.

The protein localises to the cytoplasm. Its subcellular location is the cytosol. The enzyme catalyses deacetylipecoside + H2O = deacetylipecoside aglycone + D-glucose. It catalyses the reaction deacetylisoipecoside + H2O = deacetylisoipecoside aglycone + D-glucose. Its pathway is alkaloid biosynthesis. Functionally, beta-glucosidase catalyzing deglucosylation on N-deacetylisoipecoside and N-deacetylipecoside. The chain is Ipecac alkaloid beta-glucosidase 3 from Carapichea ipecacuanha (Ipecac).